A 65-amino-acid chain; its full sequence is Large ribosomal subunit protein bL35 (65 aa).

The protein belongs to the bacterial ribosomal protein bL35 family.

The chain is Large ribosomal subunit protein bL35 from Caldicellulosiruptor bescii (strain ATCC BAA-1888 / DSM 6725 / KCTC 15123 / Z-1320) (Anaerocellum thermophilum).